We begin with the raw amino-acid sequence, 361 residues long: Putative agmatine deiminase (361 aa).

The active-site Amidino-cysteine intermediate is the Cys354.

This sequence belongs to the agmatine deiminase family.

The catalysed reaction is agmatine + H2O = N-carbamoylputrescine + NH4(+). This is Putative agmatine deiminase from Streptococcus pneumoniae (strain Hungary19A-6).